A 515-amino-acid polypeptide reads, in one-letter code: Vacuolar segregation protein PEP7 (515 aa).

The C2H2-type zinc finger occupies 6–29 (VSCPICLRKFDNLQALNAHLDVEH). The interval 36 to 58 (DSLGSNDSRLVNGKQKKARSVDS) is disordered. The FYVE-type 1; atypical zinc finger occupies 72-137 (KKGKSCCHTC…CCHDCFVTKP (66 aa)). Positions 78, 81, 94, 97, 102, 105, 129, 132, 221, 224, 237, 240, 245, 252, 289, and 292 each coordinate Zn(2+). An FYVE-type 2 zinc finger spans residues 215–297 (DRSVLFCNIC…LCSHCIDMLF (83 aa)).

As to quaternary structure, interacts with VPS21, VPS45, PEP3 and PEP5.

Its subcellular location is the vacuole membrane. In terms of biological role, required for vacuole segregation and vacuole protein sorting. Possibly part of a complex which tethers the vacuole membrane to microtubules, either directly or via kinesin or dynein-like motor proteins. Probably functions in several interorganelle traffic pathways. The sequence is that of Vacuolar segregation protein PEP7 (PEP7) from Saccharomyces cerevisiae (strain ATCC 204508 / S288c) (Baker's yeast).